The sequence spans 102 residues: Large ribosomal subunit protein bL21 (102 aa).

This sequence belongs to the bacterial ribosomal protein bL21 family. Part of the 50S ribosomal subunit. Contacts protein L20.

Functionally, this protein binds to 23S rRNA in the presence of protein L20. The protein is Large ribosomal subunit protein bL21 of Trichlorobacter lovleyi (strain ATCC BAA-1151 / DSM 17278 / SZ) (Geobacter lovleyi).